The primary structure comprises 267 residues: Pro-opiomelanocortin (267 aa).

An N-terminal signal peptide occupies residues 1–26 (MPRLCGSRSGALLLTLLLQASMGVRG). Phe-87 is modified (phenylalanine amide). 2 disordered regions span residues 88–156 (GRRN…RPVK) and 215–242 (KKDEGPYKMEHFRWGSPPKDKRYGGFMT). Asn-91 carries an N-linked (GlcNAc...) asparagine glycan. Gly residues predominate over residues 94–105 (SSGGGGGGGGAG). Positions 109 to 133 (EEEEVAAGEGPGPRGDGVAPGPRQD) are excised as a propeptide. Basic and acidic residues predominate over residues 131–143 (RQDKRSYSMEHFR). Ser-136 carries the N-acetylserine; in Corticotropin modification. The residue at position 148 (Val-148) is a Valine amide. Over residues 215-237 (KKDEGPYKMEHFRWGSPPKDKRY) the composition is skewed to basic and acidic residues.

It belongs to the POMC family. Post-translationally, specific enzymatic cleavages at paired basic residues yield the different active peptides. In terms of tissue distribution, ACTH and MSH are produced by the pituitary gland.

The protein resides in the secreted. Its function is as follows. Stimulates the adrenal glands to release cortisol. In terms of biological role, anorexigenic peptide. Increases the pigmentation of skin by increasing melanin production in melanocytes. Functionally, increases the pigmentation of skin by increasing melanin production in melanocytes. Endogenous orexigenic opiate. Its function is as follows. Endogenous opiate. This chain is Pro-opiomelanocortin (POMC), found in Sus scrofa (Pig).